Here is a 611-residue protein sequence, read N- to C-terminus: E-selectin (611 aa).

An N-terminal signal peptide occupies residues 1 to 22; it reads MITSQLLPALTLVLLLFKEGGA. Positions 23 to 140 constitute a C-type lectin domain; it reads WSYNASTEAM…CDKKKLALCY (118 aa). The Extracellular segment spans residues 23-557; sequence WSYNASTEAM…CEAPTESSIP (535 aa). The N-linked (GlcNAc...) asparagine glycan is linked to N26. 19 disulfides stabilise this stretch: C41/C139, C112/C131, C144/C155, C149/C164, C166/C175, C181/C225, C194/C207, C211/C238, C243/C287, C256/C269, C273/C300, C305/C350, C336/C363, C368/C413, C399/C426, C431/C476, C462/C489, C494/C535, and C521/C548. E102, N104, and E110 together coordinate Ca(2+). A carbohydrate contacts are provided by residues 102–110, 114–119, and 127–129; these read EPNNKQNDE, EIYIKR, and NDE. The Ca(2+) site is built by N127 and D128. The EGF-like domain occupies 141–176; sequence TAACTPTSCSGHGECVETVNNYTCKCHPGFRGLRCE. N161 carries N-linked (GlcNAc...) asparagine glycosylation. 2 Sushi domains span residues 179–240 and 241–302; these read VTCQ…ACNV and VECS…TCKA. N204 carries N-linked (GlcNAc...) asparagine glycosylation. N266 carries an N-linked (GlcNAc...) asparagine glycan. N313 and N333 each carry an N-linked (GlcNAc...) asparagine glycan. Sushi domains follow at residues 316–365, 367–428, 430–491, and 492–550; these read VSCS…VCKA, QCKA…TCEA, KCDA…SCQV, and VQCF…TCEA. N528 carries an N-linked (GlcNAc...) asparagine glycan. A helical transmembrane segment spans residues 558-579; the sequence is LAVGLTAGGTSLLTVASFLLWL. The Cytoplasmic portion of the chain corresponds to 580-611; that stretch reads LKRLRKRAKKFVPASSCQSLQSDGSYHMPCSI.

It belongs to the selectin/LECAM family. Interacts with SELPLG/PSGL1 and PODXL2 through the sialyl Lewis X epitope. SELPLG sulfation appears not to be required for this interaction.

It is found in the cell membrane. Cell-surface glycoprotein having a role in immunoadhesion. Mediates in the adhesion of blood neutrophils in cytokine-activated endothelium through interaction with SELPLG/PSGL1. May have a role in capillary morphogenesis. The sequence is that of E-selectin (SELE) from Canis lupus familiaris (Dog).